A 73-amino-acid polypeptide reads, in one-letter code: Translation initiation factor IF-1 (73 aa).

The region spanning 1-73 (MAKKDGAIEV…TRGRIVYRYK (73 aa)) is the S1-like domain.

It belongs to the IF-1 family. As to quaternary structure, component of the 30S ribosomal translation pre-initiation complex which assembles on the 30S ribosome in the order IF-2 and IF-3, IF-1 and N-formylmethionyl-tRNA(fMet); mRNA recruitment can occur at any time during PIC assembly.

Its subcellular location is the cytoplasm. One of the essential components for the initiation of protein synthesis. Stabilizes the binding of IF-2 and IF-3 on the 30S subunit to which N-formylmethionyl-tRNA(fMet) subsequently binds. Helps modulate mRNA selection, yielding the 30S pre-initiation complex (PIC). Upon addition of the 50S ribosomal subunit IF-1, IF-2 and IF-3 are released leaving the mature 70S translation initiation complex. In Mycolicibacterium gilvum (strain PYR-GCK) (Mycobacterium gilvum (strain PYR-GCK)), this protein is Translation initiation factor IF-1.